Consider the following 465-residue polypeptide: 2-halobenzoate 1,2-dioxygenase large subunit (465 aa).

The region spanning 56–154 is the Rieske domain; sequence WVFLAHESQV…GFNVDGSHDL (99 aa). Cysteine 98, histidine 100, cysteine 118, and histidine 121 together coordinate [2Fe-2S] cluster. Residues histidine 227 and histidine 232 each contribute to the Fe cation site.

It belongs to the bacterial ring-hydroxylating dioxygenase alpha subunit family. As to quaternary structure, heterohexamer of 3 large (CbdA) subunits and 3 small (CbdB) subunits. The heterohexamer is part of 2-halobenzoate dioxygenase two component enzyme system. The other component is a NADH:acceptor reductase (CdbC). It depends on [2Fe-2S] cluster as a cofactor. The cofactor is Fe(2+).

It catalyses the reaction a 2-halobenzoate + NADH + O2 + H(+) = a halide anion + catechol + CO2 + NAD(+). It participates in xenobiotic degradation; benzoate degradation via CoA ligation. In terms of biological role, component of 2-halobenzoate dioxygenase multicomponent enzyme system which catalyzes the incorporation of both atoms of molecular oxygen into 2-halobenzoate to form catechol. The protein is 2-halobenzoate 1,2-dioxygenase large subunit (cbdA) of Burkholderia cepacia (Pseudomonas cepacia).